Here is a 194-residue protein sequence, read N- to C-terminus: Peptidyl-tRNA hydrolase (194 aa).

Tyr16 lines the tRNA pocket. Catalysis depends on His21, which acts as the Proton acceptor. TRNA-binding residues include Phe66, Asn68, and Asn114.

Belongs to the PTH family. Monomer.

The protein resides in the cytoplasm. The catalysed reaction is an N-acyl-L-alpha-aminoacyl-tRNA + H2O = an N-acyl-L-amino acid + a tRNA + H(+). Its function is as follows. Hydrolyzes ribosome-free peptidyl-tRNAs (with 1 or more amino acids incorporated), which drop off the ribosome during protein synthesis, or as a result of ribosome stalling. In terms of biological role, catalyzes the release of premature peptidyl moieties from peptidyl-tRNA molecules trapped in stalled 50S ribosomal subunits, and thus maintains levels of free tRNAs and 50S ribosomes. This chain is Peptidyl-tRNA hydrolase, found in Geobacter metallireducens (strain ATCC 53774 / DSM 7210 / GS-15).